The following is a 240-amino-acid chain: Small ribosomal subunit protein uS3 (240 aa).

The 71-residue stretch at 39–109 (IRQYVEKNLS…QIRINVVEVA (71 aa)) folds into the KH type-2 domain. The tract at residues 214–240 (EEQAPAQPATTPKRQRRRQQFEDRSNE) is disordered.

Belongs to the universal ribosomal protein uS3 family. Part of the 30S ribosomal subunit. Forms a tight complex with proteins S10 and S14.

Binds the lower part of the 30S subunit head. Binds mRNA in the 70S ribosome, positioning it for translation. The sequence is that of Small ribosomal subunit protein uS3 from Gloeothece citriformis (strain PCC 7424) (Cyanothece sp. (strain PCC 7424)).